A 112-amino-acid chain; its full sequence is Nucleoid-associated protein RER_03900 (112 aa).

This sequence belongs to the YbaB/EbfC family. In terms of assembly, homodimer.

It localises to the cytoplasm. Its subcellular location is the nucleoid. Its function is as follows. Binds to DNA and alters its conformation. May be involved in regulation of gene expression, nucleoid organization and DNA protection. The polypeptide is Nucleoid-associated protein RER_03900 (Rhodococcus erythropolis (strain PR4 / NBRC 100887)).